We begin with the raw amino-acid sequence, 254 residues long: Phosphate import ATP-binding protein PstB (254 aa).

An ABC transporter domain is found at 9-249 (MSVKDLDLFY…PVDKRTEDYI (241 aa)). ATP is bound at residue 41 to 48 (GPSGCGKS).

The protein belongs to the ABC transporter superfamily. Phosphate importer (TC 3.A.1.7) family. In terms of assembly, the complex is composed of two ATP-binding proteins (PstB), two transmembrane proteins (PstC and PstA) and a solute-binding protein (PstS).

It is found in the cell membrane. It carries out the reaction phosphate(out) + ATP + H2O = ADP + 2 phosphate(in) + H(+). Its function is as follows. Part of the ABC transporter complex PstSACB involved in phosphate import. Responsible for energy coupling to the transport system. This is Phosphate import ATP-binding protein PstB from Clostridioides difficile (strain 630) (Peptoclostridium difficile).